The following is a 530-amino-acid chain: Developmental and secondary metabolism regulator VEL1 (530 aa).

The 195-residue stretch at 26-220 folds into the Velvet domain; the sequence is NRSLWYQMTV…ADQGCQVRIR (195 aa). The short motif at 40–45 is the Nuclear localization signal element; sequence ERARAC. Positions 206–516 are disordered; sequence LSKTVADQGC…HDQGWYSRAD (311 aa). Basic and acidic residues predominate over residues 244–253; sequence FERREEDFGR. Residues 295 to 305 are compositionally biased toward pro residues; sequence YPPPPPPPSYE. A compositionally biased stretch (polar residues) spans 347 to 356; it reads YAPTAQSPYS. The segment covering 380 to 389 has biased composition (basic and acidic residues); that stretch reads VKHDLYDRRQ. Positions 390–404 are enriched in low complexity; it reads STSSYVPPSPSVYST. Residues 415–426 show a composition bias toward pro residues; the sequence is SYPPTPVAAPRP. The tract at residues 429–460 is PEST; the sequence is MHSQTSLPALKIDQLVSPVSPLPPIEPQTGPA. Polar residues predominate over residues 478 to 490; it reads FAQSTRPLHNGQR.

The protein belongs to the velvet family. VeA subfamily. Component of the heterotrimeric velvet complex composed of LAE1, VEL1 and VEL2; VEL1 acting as a bridging protein between LAE1 and VEL2. Interacts with LAE1.

The protein resides in the nucleus. It localises to the cytoplasm. Its function is as follows. Component of the velvet transcription factor complex that controls sexual/asexual developmental ratio in response to light, promoting sexual development in the darkness while stimulating asexual sporulation under illumination. The velvet complex hat acts as a global regulator for secondary metabolite gene expression. Controls positively the expression of the gibberellins, fumonisins and fusarin C gene clusters. Controls the expression of the fusaric acid gene cluster. Controls negatively the expression of the bikaverin gene cluster. Regulates the expression of laeA. Plays a crucial role in virulence. The sequence is that of Developmental and secondary metabolism regulator VEL1 from Gibberella fujikuroi (strain CBS 195.34 / IMI 58289 / NRRL A-6831) (Bakanae and foot rot disease fungus).